Consider the following 662-residue polypeptide: Polyadenylate-binding protein 4 (662 aa).

The disordered stretch occupies residues 1 to 23 (MAQVQAPSSHSPPPPAVVNDGAA). 4 RRM domains span residues 46–124 (CSLY…YSSR), 134–211 (GNLF…PFLR), 225–302 (TNVY…KAQK), and 328–405 (LNLY…LAQR). 2 stretches are compositionally biased toward low complexity: residues 480 to 489 (PMMQPGQQGP) and 506 to 518 (QQPM…QMMP). Disordered stretches follow at residues 480–518 (PMMQ…QMMP) and 634–662 (NQPS…NDHL). The region spanning 558–635 (SAGQLATSLA…ALDVLRNVNQ (78 aa)) is the PABC domain. Over residues 634–649 (NQPSSQGSEGNKSGSP) the composition is skewed to polar residues.

It belongs to the polyadenylate-binding protein type-1 family. As to quaternary structure, interacts with ERD15/CID1. Interacts with Turnip mosaic virus (TuMV) VPg-Pro.

Its subcellular location is the cytoplasm. The protein localises to the nucleus. In terms of biological role, binds the poly(A) tail of mRNA. Appears to be an important mediator of the multiple roles of the poly(A) tail in mRNA biogenesis, stability and translation. During infection with potyvirus TuMV, acts as a potential integral component of the viral replicase complex that could play an important role in the regulation of potyviral RNA-dependent RNA polymerase (RdRp). In Arabidopsis thaliana (Mouse-ear cress), this protein is Polyadenylate-binding protein 4 (PAB4).